The sequence spans 221 residues: Putative transmembrane protein ORF25 (221 aa).

Residues Met1–Ser23 form the signal peptide. 2 N-linked (GlcNAc...) asparagine; by host glycosylation sites follow: Asn19 and Asn179. Over Gln24–Ser191 the chain is Extracellular. Residues Val192 to Ile212 traverse the membrane as a helical segment. The Cytoplasmic portion of the chain corresponds to Ala213–His221.

The protein localises to the host membrane. The polypeptide is Putative transmembrane protein ORF25 (Ostreid herpesvirus 1 (isolate France) (OsHV-1)).